The sequence spans 257 residues: NAD-capped RNA hydrolase NudC (257 aa).

Substrate is bound at residue R69. C98 and C101 together coordinate Zn(2+). E111 is a substrate binding site. Positions 116 and 119 each coordinate Zn(2+). Y124 serves as a coordination point for substrate. The Nudix hydrolase domain occupies 125–248; sequence PQIAPCIIVA…TVARRLIEDT (124 aa). Positions 158, 174, and 178 each coordinate a divalent metal cation. Positions 159–180 match the Nudix box motif; it reads GFVEVGETLEQAVAREVMEESG. A substrate-binding site is contributed by 192-199; sequence QPWPFPQS. E219 lines the a divalent metal cation pocket. A241 is a binding site for substrate.

Belongs to the Nudix hydrolase family. NudC subfamily. As to quaternary structure, homodimer. It depends on Mg(2+) as a cofactor. The cofactor is Mn(2+). Requires Zn(2+) as cofactor.

The enzyme catalyses a 5'-end NAD(+)-phospho-ribonucleoside in mRNA + H2O = a 5'-end phospho-adenosine-phospho-ribonucleoside in mRNA + beta-nicotinamide D-ribonucleotide + 2 H(+). The catalysed reaction is NAD(+) + H2O = beta-nicotinamide D-ribonucleotide + AMP + 2 H(+). It carries out the reaction NADH + H2O = reduced beta-nicotinamide D-ribonucleotide + AMP + 2 H(+). Functionally, mRNA decapping enzyme that specifically removes the nicotinamide adenine dinucleotide (NAD) cap from a subset of mRNAs by hydrolyzing the diphosphate linkage to produce nicotinamide mononucleotide (NMN) and 5' monophosphate mRNA. The NAD-cap is present at the 5'-end of some mRNAs and stabilizes RNA against 5'-processing. Has preference for mRNAs with a 5'-end purine. Catalyzes the hydrolysis of a broad range of dinucleotide pyrophosphates. This chain is NAD-capped RNA hydrolase NudC, found in Salmonella choleraesuis (strain SC-B67).